We begin with the raw amino-acid sequence, 369 residues long: RNA pseudouridine synthase 5 (369 aa).

Residues 47–104 (APLLGWIQRIQNGQIQIDGEVVKDPNTLLRSGSKLVYSRLPWKEPDTPYSLEVLYEDD) enclose the S4 RNA-binding domain.

Belongs to the pseudouridine synthase RluA family.

The catalysed reaction is a uridine in RNA = a pseudouridine in RNA. The chain is RNA pseudouridine synthase 5 from Arabidopsis thaliana (Mouse-ear cress).